Reading from the N-terminus, the 400-residue chain is MTQFASPVLHSLLDTDAYKLHMQQAVFHHYYDVQVAAEFRCRGDDLLGIYADAIREQVDAMQHLRLLEDEFQWLSGLPFFKPDYLNWLREFRYNPAQVCVTNDNGKLNIRLTGPWREVIMWEVPLLAVISELVHHYRSPNAGVDQALDALESKLVDFTALTANLDMSRFHLMDFGTRRRFSREVQQAIVKRLQQESWFVGTSNYDLARRLALTPMGTQAHEWFQAHQQISPDLATSQRAALAAWLNEYPDQLGIALTDCITMDAFLRDFGIEFASRYQGLRHDSGDPVAWGEKAIAHYEKLGIDPLTKTLVFSDNLDLPKAVELYRHFASRVQLSFGIGTRLTCDIPQVKPLNIVIKLVECNGKPVAKLSDSPGKTICHDKAFVRALRKAFDLPQVRKAS.

A Phosphohistidine; by autocatalysis modification is found at H220.

The protein belongs to the NAPRTase family. In terms of processing, transiently phosphorylated on a His residue during the reaction cycle. Phosphorylation strongly increases the affinity for substrates and increases the rate of nicotinate D-ribonucleotide production. Dephosphorylation regenerates the low-affinity form of the enzyme, leading to product release.

It catalyses the reaction nicotinate + 5-phospho-alpha-D-ribose 1-diphosphate + ATP + H2O = nicotinate beta-D-ribonucleotide + ADP + phosphate + diphosphate. The protein operates within cofactor biosynthesis; NAD(+) biosynthesis; nicotinate D-ribonucleotide from nicotinate: step 1/1. Catalyzes the synthesis of beta-nicotinate D-ribonucleotide from nicotinate and 5-phospho-D-ribose 1-phosphate at the expense of ATP. This Salmonella typhimurium (strain LT2 / SGSC1412 / ATCC 700720) protein is Nicotinate phosphoribosyltransferase.